The following is a 42-amino-acid chain: Photosystem I reaction center subunit IX (42 aa).

The chain crosses the membrane as a helical span at residues 7–27 (YLSAAPVLSTLWLGALAGLLI).

This sequence belongs to the PsaJ family.

It localises to the plastid membrane. Functionally, may help in the organization of the PsaE and PsaF subunits. The protein is Photosystem I reaction center subunit IX of Cuscuta exaltata (Tall dodder).